The sequence spans 305 residues: UDP-N-acetylenolpyruvoylglucosamine reductase 2 (305 aa).

The 165-residue stretch at 33 to 197 (VGGKADVFVA…LEARFELEEG (165 aa)) folds into the FAD-binding PCMH-type domain. The active site involves Arg-176. Ser-226 acts as the Proton donor in catalysis. Glu-296 is a catalytic residue.

It belongs to the MurB family. Requires FAD as cofactor.

The protein resides in the cytoplasm. It catalyses the reaction UDP-N-acetyl-alpha-D-muramate + NADP(+) = UDP-N-acetyl-3-O-(1-carboxyvinyl)-alpha-D-glucosamine + NADPH + H(+). It functions in the pathway cell wall biogenesis; peptidoglycan biosynthesis. Its function is as follows. Cell wall formation. The protein is UDP-N-acetylenolpyruvoylglucosamine reductase 2 (murB2) of Bacillus cereus (strain ATCC 14579 / DSM 31 / CCUG 7414 / JCM 2152 / NBRC 15305 / NCIMB 9373 / NCTC 2599 / NRRL B-3711).